The following is a 558-amino-acid chain: Cyclomaltodextrinase (558 aa).

Residues asparagine 143, glycine 168, and aspartate 170 each contribute to the Ca(2+) site. Positions 243 and 323 each coordinate substrate. The Nucleophile role is filled by aspartate 325. The active-site Proton donor is glutamate 354. Substrate contacts are provided by residues 420–421 (HD), aspartate 465, and arginine 469.

This sequence belongs to the glycosyl hydrolase 13 family. As to quaternary structure, monomer. Depending on the pH of the solution, exists as a monomer, a homodimer or as an assembly of six homodimers forming a dodecamer, which is catalytically the most efficient form of the enzyme. Requires Ca(2+) as cofactor.

It carries out the reaction cyclomaltodextrin + H2O = linear maltodextrin. The catalysed reaction is Hydrolysis of pullulan to panose (6-alpha-D-glucosylmaltose).. With respect to regulation, hydrolysis of beta-cyclodextrin is inhibited by Cu(2+), Zn(2+) and Ag(+), and activated by Ca(2+), EGTA and EDTA. Activity is increased over twofold in the presence of 5 mM EDTA. Competitively inhibited by acarbose and methyl 6-amino-6-deoxy-alpha-D-glucopyranoside by reducing the rate of the ring opening step of the reaction. Its function is as follows. Hydrolyzes alpha-, beta- and gamma-cyclodextrins and the resulting linear maltodextrins, with the highest activity with beta-cyclodextrin (cyclomaltoheptaose). Soluble starch is hydrolyzed slowly, but it is nevertheless preferred over pullulan as a substrate. Is able to hydrolyze amylose and amylopectin, with a very strong preference for amylose, with maltose and glucose as the main products. Maltose and glucose are the main hydrolysis products of cyclomaltodextrins, maltodextrins and starch, whereas panose is the main hydrolysis product of pullulan. Acarbose is partially hydrolyzed to glucose and pseudotrisaccharide. No activity with maltose as substrate. Has transglycosylating activity with high concentrations of maltotriose, maltotetraose and starch. This Bacillus sp protein is Cyclomaltodextrinase.